The sequence spans 356 residues: Transcription factor ATOH1 (356 aa).

Positions 1-21 (MSRLLHAEEWAEVKELGDHHR) are enriched in basic and acidic residues. Disordered stretches follow at residues 1 to 56 (MSRL…PELS) and 92 to 125 (SEAA…GPVK). Pro residues predominate over residues 26 to 40 (HHLPQPPPPPPPQPP). The segment covering 96–109 (APRDEVDGRGELVR) has biased composition (basic and acidic residues). A compositionally biased stretch (low complexity) spans 110-124 (RSSGGASSSKSPGPV). Residues 161–213 (QRRLAANARERRRMHGLNHAFDQLRNVIPSFNNDKKLSKYETLQMAQIYINAL) enclose the bHLH domain. Disordered regions lie at residues 218 to 279 (QTPS…TRFS) and 314 to 356 (SPSL…DEAS). A compositionally biased stretch (low complexity) spans 252–266 (NATAAGAQQASGGSQ). The segment covering 337–356 (HRSDGEFSPHSHYSDSDEAS) has biased composition (basic and acidic residues).

In terms of assembly, efficient DNA binding requires dimerization with another bHLH protein.

It localises to the nucleus. In terms of biological role, transcriptional regulator. Activates E box-dependent transcription in collaboration with TCF3/E47, but the activity is completely antagonized by the negative regulator of neurogenesis HES1. Plays a role in the differentiation of subsets of neural cells by activating E box-dependent transcription. This is Transcription factor ATOH1 from Pan troglodytes (Chimpanzee).